The following is a 709-amino-acid chain: Elongation factor G (709 aa).

One can recognise a tr-type G domain in the interval Ala8–Leu297. GTP-binding positions include Ala17–Thr24, Asp81–His85, and Asn135–Asp138.

Belongs to the TRAFAC class translation factor GTPase superfamily. Classic translation factor GTPase family. EF-G/EF-2 subfamily.

The protein localises to the cytoplasm. In terms of biological role, catalyzes the GTP-dependent ribosomal translocation step during translation elongation. During this step, the ribosome changes from the pre-translocational (PRE) to the post-translocational (POST) state as the newly formed A-site-bound peptidyl-tRNA and P-site-bound deacylated tRNA move to the P and E sites, respectively. Catalyzes the coordinated movement of the two tRNA molecules, the mRNA and conformational changes in the ribosome. In Lactococcus lactis subsp. lactis (strain IL1403) (Streptococcus lactis), this protein is Elongation factor G.